We begin with the raw amino-acid sequence, 372 residues long: MSNQHILLTSNLLPVGSNISTWWNFGSMLLTCLILQITTGFFLAIHYTANINLAFSSVIHITRDVPHGWIMQNLHAIGASMFFICIYIHIARGLYYGLYLNKEVWLSGTALLILLMATAFFGYVLPWGQMSFWAATVITNLLTAIPYLGSALTTWLWGGFSINDPTLTRFFALHFILPFTIISMSSIHIILLHNEGSNNPLGTNPDIDKIPFHPYHSYKDMLMITIMITFMLLILSFSPDLMNDPENYSKANPLITPQHIKPEWYFLFAYGILRSIPNKLGGTLALFMSIAILMTAPFTHTSYTRSMSFRPLTQTMFWILIATFITITWTATKPVEPPFISISQVTSIIYFSFFIINPLLGWVENKLSTLNN.

4 helical membrane-spanning segments follow: residues 25–45 (FGSMLLTCLILQITTGFFLAI), 69–90 (WIMQNLHAIGASMFFICIYIHI), 105–125 (WLSGTALLILLMATAFFGYVL), and 170–190 (FFALHFILPFTIISMSSIHII). 2 residues coordinate heme b: His-75 and His-89. Residues His-174 and His-188 each coordinate heme b. His-193 provides a ligand contact to a ubiquinone. 4 helical membrane-spanning segments follow: residues 218–238 (YKDMLMITIMITFMLLILSFS), 280–300 (LGGTLALFMSIAILMTAPFTH), 312–332 (LTQTMFWILIATFITITWTAT), and 339–358 (FISISQVTSIIYFSFFIINP).

Belongs to the cytochrome b family. In terms of assembly, the cytochrome bc1 complex contains 3 respiratory subunits (MT-CYB, CYC1 and UQCRFS1), 2 core proteins (UQCRC1 and UQCRC2) and probably 6 low-molecular weight proteins. Heme b serves as cofactor.

Its subcellular location is the mitochondrion inner membrane. Its function is as follows. Component of the ubiquinol-cytochrome c reductase complex (complex III or cytochrome b-c1 complex) that is part of the mitochondrial respiratory chain. The b-c1 complex mediates electron transfer from ubiquinol to cytochrome c. Contributes to the generation of a proton gradient across the mitochondrial membrane that is then used for ATP synthesis. The chain is Cytochrome b (MT-CYB) from Dendroaspis polylepis polylepis (Black mamba).